The primary structure comprises 122 residues: Large ribosomal subunit protein uL14 (122 aa).

The protein belongs to the universal ribosomal protein uL14 family. Part of the 50S ribosomal subunit. Forms a cluster with proteins L3 and L19. In the 70S ribosome, L14 and L19 interact and together make contacts with the 16S rRNA in bridges B5 and B8.

Its function is as follows. Binds to 23S rRNA. Forms part of two intersubunit bridges in the 70S ribosome. This Lactobacillus delbrueckii subsp. bulgaricus (strain ATCC BAA-365 / Lb-18) protein is Large ribosomal subunit protein uL14.